The sequence spans 221 residues: Probable N-acetyl-alpha-D-glucosaminyl L-malate deacetylase 2 (221 aa).

Zn(2+) contacts are provided by His11, Asp14, and His125.

Belongs to the PIGL family. Zn(2+) is required as a cofactor.

The enzyme catalyses (S)-malyl N-acetyl-alpha-D-glucosaminide + H2O = (S)-malyl alpha-D-glucosaminide + acetate. In terms of biological role, involved in bacillithiol (BSH) biosynthesis. Catalyzes the second step of the pathway, the deacetylation of N-acetylglucosaminylmalate (GlcNAc-Mal) to glucosamine malate (GlcN-Mal). This is Probable N-acetyl-alpha-D-glucosaminyl L-malate deacetylase 2 from Bacillus subtilis (strain 168).